Consider the following 307-residue polypeptide: UPF0276 protein HI_1600 (307 aa).

The protein belongs to the UPF0276 family.

The protein is UPF0276 protein HI_1600 of Haemophilus influenzae (strain ATCC 51907 / DSM 11121 / KW20 / Rd).